The sequence spans 1079 residues: Ubiquitin carboxyl-terminal hydrolase 26 (1079 aa).

A compositionally biased stretch (basic residues) spans 1–12 (MSRPNTRNKSKR). The tract at residues 1–21 (MSRPNTRNKSKRPRADDCESP) is disordered. Positions 106 to 446 (AGLTNLGATC…DAYMLMYKRI (341 aa)) constitute a USP domain. Cys-115 serves as the catalytic Nucleophile. His-359 (proton acceptor) is an active-site residue. Residues 384–419 (GLHPFGEKPGKSSDKTDQKPQGSSTADSVTNDDNNS) form a disordered region. Residues 388-401 (FGEKPGKSSDKTDQ) are compositionally biased toward basic and acidic residues. The segment covering 402–417 (KPQGSSTADSVTNDDN) has biased composition (polar residues). 3 DUSP domains span residues 495 to 598 (AYIT…DDFC), 613 to 715 (DVYR…FPSD), and 738 to 862 (AVKL…AEIV). The segment at 948-972 (EASAAVPVPDRRTSKRSRRTTSGNS) is disordered. The region spanning 961 to 1037 (SKRSRRTTSG…LWVKDSEIYE (77 aa)) is the Ubiquitin-like domain.

The protein belongs to the peptidase C19 family.

The protein resides in the nucleus. It carries out the reaction Thiol-dependent hydrolysis of ester, thioester, amide, peptide and isopeptide bonds formed by the C-terminal Gly of ubiquitin (a 76-residue protein attached to proteins as an intracellular targeting signal).. Its function is as follows. Recognizes and hydrolyzes the peptide bond at the C-terminal Gly of ubiquitin. Involved in the processing of poly-ubiquitin precursors as well as that of ubiquitinated proteins. Deubiquitinates H2BK143ub1 of histone H2B. The protein is Ubiquitin carboxyl-terminal hydrolase 26 (UBP26) of Oryza sativa subsp. japonica (Rice).